A 438-amino-acid chain; its full sequence is sn-glycerol-3-phosphate-binding periplasmic protein UgpB (438 aa).

A signal peptide spans 1–23; it reads MKPLRYTASALALGLALMANAQA. The sn-glycerol 3-phosphate site is built by Tyr-65, Glu-89, Ser-144, Ser-270, Gly-307, Tyr-346, and Arg-397.

The protein belongs to the bacterial solute-binding protein 1 family. As to quaternary structure, the complex is composed of two ATP-binding proteins (UgpC), two transmembrane proteins (UgpA and UgpE) and a solute-binding protein (UgpB).

Its subcellular location is the periplasm. Its function is as follows. Part of the ABC transporter complex UgpBAEC involved in sn-glycerol-3-phosphate (G3P) import. Binds G3P. The polypeptide is sn-glycerol-3-phosphate-binding periplasmic protein UgpB (ugpB) (Escherichia coli O6:K15:H31 (strain 536 / UPEC)).